Consider the following 230-residue polypeptide: Sodium channel modifier 1 (230 aa).

Phosphoserine is present on S2. The Bipartite nuclear localization signal signature appears at 4–20 (KREGDDWSQLNVLKKRR). The Matrin-type zinc finger occupies 42-74 (FACAICPHRPVLDTLAMLTAHRAGKKHLSSLQL). K67 is covalently cross-linked (Glycyl lysine isopeptide (Lys-Gly) (interchain with G-Cter in SUMO2)). 3 disordered regions span residues 76–106 (YGKK…EAPL), 129–186 (RRKY…SPTR), and 200–230 (GWIP…LPLD). A compositionally biased stretch (basic and acidic residues) spans 81 to 102 (PGKERKQNPKHQNELRREETKA). S144 bears the Phosphoserine mark. Over residues 164 to 174 (PAAGPQAEESA) the composition is skewed to low complexity. At S183 the chain carries Phosphoserine. The interval 188-230 (RALDHYLTLRSSGWIPDGRGRWVKDENVEFDSDEEEPPDLPLD) is required for interaction with LUC7L2. Positions 205–214 (GRGRWVKDEN) are enriched in basic and acidic residues. Residues 215-230 (VEFDSDEEEPPDLPLD) show a composition bias toward acidic residues. The residue at position 219 (S219) is a Phosphoserine.

In terms of assembly, component of the minor spliceosome, which splices U12-type introns. Within this complex, interacts with RNF113A, as well as with SF3B1/SF3b155, SF3B2/SF3b145, SF3B3/SF3b130 and CDC5L. May interact with LUC7L2 and SNRNP70.

Its subcellular location is the nucleus. It is found in the nucleoplasm. The protein resides in the nucleus speckle. Functionally, as a component of the minor spliceosome, involved in the splicing of U12-type introns in pre-mRNAs. Plays a role in the regulation of primary cilia length and Hedgehog signaling. The chain is Sodium channel modifier 1 (SCNM1) from Homo sapiens (Human).